Consider the following 31-residue polypeptide: GVIPCGESCVFIPCISSVVGCTCKNKVCYRD.

A cross-link (cyclopeptide (Gly-Asp)) is located at residues 1–31 (GVIPCGESCVFIPCISSVVGCTCKNKVCYRD). Disulfide bonds link Cys5–Cys21, Cys9–Cys23, and Cys14–Cys28.

In terms of processing, this is a cyclic peptide. Contains 3 disulfide bonds.

In terms of biological role, probably participates in a plant defense mechanism (Potential). Binds to and induces leakage in phospholipd membranes, particularly ones containing 1-palmitoyl-2-oleophosphatidylethanolamine (POPE). This is Cyclotide mech-5 from Melicytus chathamicus (Chatham Island mahoe).